A 266-amino-acid polypeptide reads, in one-letter code: Small ribosomal subunit protein eS1 (266 aa).

The segment at 236–266 (GAGTAAKATGDDTGAKVERADGYEPPIQESV) is disordered. Residues 244-257 (TGDDTGAKVERADG) show a composition bias toward basic and acidic residues.

Belongs to the eukaryotic ribosomal protein eS1 family. Component of the small ribosomal subunit. Mature ribosomes consist of a small (40S) and a large (60S) subunit. The 40S subunit contains about 33 different proteins and 1 molecule of RNA (18S). The 60S subunit contains about 49 different proteins and 3 molecules of RNA (28S, 5.8S and 5S). Part of the small subunit (SSU) processome, composed of more than 70 proteins and the RNA chaperone small nucleolar RNA (snoRNA) U3.

The protein resides in the cytoplasm. Its subcellular location is the nucleus. The protein localises to the nucleolus. Component of the small ribosomal subunit. The ribosome is a large ribonucleoprotein complex responsible for the synthesis of proteins in the cell. Part of the small subunit (SSU) processome, first precursor of the small eukaryotic ribosomal subunit. During the assembly of the SSU processome in the nucleolus, many ribosome biogenesis factors, an RNA chaperone and ribosomal proteins associate with the nascent pre-rRNA and work in concert to generate RNA folding, modifications, rearrangements and cleavage as well as targeted degradation of pre-ribosomal RNA by the RNA exosome. May play a role during erythropoiesis. This Tetraodon nigroviridis (Spotted green pufferfish) protein is Small ribosomal subunit protein eS1 (rps3a).